The chain runs to 127 residues: Small ribosomal subunit protein uS12 (127 aa).

Residues 11–20 (GRKPKKKKSK) show a composition bias toward basic residues. Residues 11 to 30 (GRKPKKKKSKAPALQGNPQK) form a disordered region. D89 is modified (3-methylthioaspartic acid). The interval 105–127 (AGVEGRRQSRSKYGAKRPKDQKK) is disordered. Over residues 112–127 (QSRSKYGAKRPKDQKK) the composition is skewed to basic residues.

It belongs to the universal ribosomal protein uS12 family. In terms of assembly, part of the 30S ribosomal subunit. Contacts proteins S8 and S17. May interact with IF1 in the 30S initiation complex.

Functionally, with S4 and S5 plays an important role in translational accuracy. Its function is as follows. Interacts with and stabilizes bases of the 16S rRNA that are involved in tRNA selection in the A site and with the mRNA backbone. Located at the interface of the 30S and 50S subunits, it traverses the body of the 30S subunit contacting proteins on the other side and probably holding the rRNA structure together. The combined cluster of proteins S8, S12 and S17 appears to hold together the shoulder and platform of the 30S subunit. The protein is Small ribosomal subunit protein uS12 of Thermotoga maritima (strain ATCC 43589 / DSM 3109 / JCM 10099 / NBRC 100826 / MSB8).